A 214-amino-acid polypeptide reads, in one-letter code: MAQSKFLREYKLVVVGGGGVGKSCLTIQLIQSHFVDEYDPTIEDSYRKQCVIDDEVALLDVLDTAGQEEYSAMREQYMRTGEGFLLVYSITSRQSFEEITTFQQQILRVKDKDYFPMVVVGNKCDLEGEREVTRQEGEALARSFNCKFIETSAKSRINVDKAFYDIVREIRRYNREMQGYSTGSGGSNAGGPSNKMEVNDSDAEAGCCSKCVLM.

GTP contacts are provided by residues G19 to C24, V35 to T41, A65 to G66, N122 to D125, and S152 to K154. Residues Y38–Y46 carry the Effector region motif. Positions Q178–E197 are disordered. C211 carries the cysteine methyl ester modification. A lipid anchor (S-farnesyl cysteine) is attached at C211. The propeptide at V212–M214 is removed in mature form.

The protein belongs to the small GTPase superfamily. Ras family. In terms of assembly, interacts with farnesyltransferase beta subunit RAM1.

Its subcellular location is the cell membrane. Its activity is regulated as follows. Alternates between an inactive form bound to GDP and an active form bound to GTP. Activated by a guanine nucleotide-exchange factor (GEF) and inactivated by a GTPase-activating protein (GAP). Functionally, modulates the activity of the adenylate cyclase catalytic subunit and therefore affects the biosynthesis of cyclic-AMP. Plays a role in both surface attachment and surface recognition of appressoria, a highly specialized infection structure for plant penetration. Regulates appressorium formation by coordinated regulation of cAMP signaling and Pmk1 MAPK pathways. The protein is Ras-like protein 2 of Pyricularia oryzae (strain 70-15 / ATCC MYA-4617 / FGSC 8958) (Rice blast fungus).